Consider the following 556-residue polypeptide: Formate--tetrahydrofolate ligase 1 (556 aa).

65–72 (TPAGEGKS) contacts ATP.

The protein belongs to the formate--tetrahydrofolate ligase family.

It catalyses the reaction (6S)-5,6,7,8-tetrahydrofolate + formate + ATP = (6R)-10-formyltetrahydrofolate + ADP + phosphate. It participates in one-carbon metabolism; tetrahydrofolate interconversion. The polypeptide is Formate--tetrahydrofolate ligase 1 (Streptococcus pyogenes serotype M2 (strain MGAS10270)).